A 160-amino-acid chain; its full sequence is Probable transcriptional regulator YgiV (160 aa).

In terms of biological role, represses expression of mcbR. The chain is Probable transcriptional regulator YgiV (ygiV) from Escherichia coli O157:H7.